The sequence spans 185 residues: Elongation factor P (185 aa).

The protein belongs to the elongation factor P family.

Its subcellular location is the cytoplasm. Its pathway is protein biosynthesis; polypeptide chain elongation. Involved in peptide bond synthesis. Stimulates efficient translation and peptide-bond synthesis on native or reconstituted 70S ribosomes in vitro. Probably functions indirectly by altering the affinity of the ribosome for aminoacyl-tRNA, thus increasing their reactivity as acceptors for peptidyl transferase. This chain is Elongation factor P, found in Oleidesulfovibrio alaskensis (strain ATCC BAA-1058 / DSM 17464 / G20) (Desulfovibrio alaskensis).